The primary structure comprises 130 residues: Small ribosomal subunit protein uS8B (130 aa).

This sequence belongs to the universal ribosomal protein uS8 family. As to quaternary structure, component of the small ribosomal subunit (SSU). Mature yeast ribosomes consist of a small (40S) and a large (60S) subunit. The 40S small subunit contains 1 molecule of ribosomal RNA (18S rRNA) and 33 different proteins (encoded by 57 genes). The large 60S subunit contains 3 rRNA molecules (25S, 5.8S and 5S rRNA) and 46 different proteins (encoded by 81 genes).

The protein localises to the cytoplasm. Functionally, component of the ribosome, a large ribonucleoprotein complex responsible for the synthesis of proteins in the cell. The small ribosomal subunit (SSU) binds messenger RNAs (mRNAs) and translates the encoded message by selecting cognate aminoacyl-transfer RNA (tRNA) molecules. The large subunit (LSU) contains the ribosomal catalytic site termed the peptidyl transferase center (PTC), which catalyzes the formation of peptide bonds, thereby polymerizing the amino acids delivered by tRNAs into a polypeptide chain. The nascent polypeptides leave the ribosome through a tunnel in the LSU and interact with protein factors that function in enzymatic processing, targeting, and the membrane insertion of nascent chains at the exit of the ribosomal tunnel. The polypeptide is Small ribosomal subunit protein uS8B (Saccharomyces cerevisiae (strain ATCC 204508 / S288c) (Baker's yeast)).